The primary structure comprises 119 residues: Large ribosomal subunit protein bL19 (119 aa).

Belongs to the bacterial ribosomal protein bL19 family.

This protein is located at the 30S-50S ribosomal subunit interface and may play a role in the structure and function of the aminoacyl-tRNA binding site. The sequence is that of Large ribosomal subunit protein bL19 from Borreliella afzelii (strain PKo) (Borrelia afzelii).